The sequence spans 326 residues: Thiazole synthase (326 aa).

Catalysis depends on Lys-168, which acts as the Schiff-base intermediate with DXP. 1-deoxy-D-xylulose 5-phosphate is bound by residues Gly-229, 255 to 256, and 277 to 278; these read AG and NT.

It belongs to the ThiG family. In terms of assembly, homotetramer. Forms heterodimers with either ThiH or ThiS.

Its subcellular location is the cytoplasm. The catalysed reaction is [ThiS sulfur-carrier protein]-C-terminal-Gly-aminoethanethioate + 2-iminoacetate + 1-deoxy-D-xylulose 5-phosphate = [ThiS sulfur-carrier protein]-C-terminal Gly-Gly + 2-[(2R,5Z)-2-carboxy-4-methylthiazol-5(2H)-ylidene]ethyl phosphate + 2 H2O + H(+). It participates in cofactor biosynthesis; thiamine diphosphate biosynthesis. Its function is as follows. Catalyzes the rearrangement of 1-deoxy-D-xylulose 5-phosphate (DXP) to produce the thiazole phosphate moiety of thiamine. Sulfur is provided by the thiocarboxylate moiety of the carrier protein ThiS. In vitro, sulfur can be provided by H(2)S. This is Thiazole synthase from Magnetococcus marinus (strain ATCC BAA-1437 / JCM 17883 / MC-1).